A 194-amino-acid polypeptide reads, in one-letter code: MTPSAAATGHEAADEQRLRELRGLTRQLPTGVAVVTAQDGEVAHGATVSTVSVLSQQPLRIGVSLRRGSYLTGLIRQRRVFALNVLSSRQSAVADWFANPERPRGWRQFDYVRWTAHPKAGMPVLEDALAQLHCRLTDLIPLGASDDLLVAEVLDGRGRNGRPLVNFNGRLHDVEFRGVVRVSRDQPSAVTSLE.

This sequence belongs to the non-flavoprotein flavin reductase family. As to quaternary structure, homodimer. It can form an isobutylamine N-hydroxylase two component enzyme system formed of a flavin reductase component (VlmR) and a monooxygenase component (VlmH).

It carries out the reaction FADH2 + NADP(+) = FAD + NADPH + 2 H(+). The catalysed reaction is FMNH2 + NADP(+) = FMN + NADPH + 2 H(+). In terms of biological role, involved in the biosynthesis of the azoxy antibiotic valanimycin, which has an antitumor activity. Catalyzes the reduction of FAD/FMN to FADH(2)/FMNH(2) which are subsequently used for the hydroxylation of isobutylamine by the isobutylamine N-hydroxylase VlmH. It can reduce either FAD or flavin mononucleotide (FMN) but prefers FAD. The enzyme has a strong preference for NADPH as acceptor. This is NADPH-flavin oxidoreductase from Streptomyces viridifaciens.